The following is a 350-amino-acid chain: MRVYSPGRVNLIGEHTDYSYGYVLPMAIDRYTVIEGEPHERVELYSEHFKKSVSFELEKLEKGNNWADYVKGVYWVLQREGYEVGGMKGRVGGNLPLGSGLSSSASFELAVLAFLNEAYSLKLSRLDMALLAKKAENEFVGVPCGILDQFAIAFGREGKAIFLDTETLDYEYLPFPEDLEVLVFYTGVKRELASSAYAERKKAIEEALRVLGKSSSKYVTEEELSKLPEKERRYLGYVVRENSRVLAFRDALKEGDVEAMGQLMVEAHRDIAENYRVSCEELDFFVEKALELGALGARLTGAGFGGSAIALVEHGKGESLGREVAELYTKVFPWTPEVFVVRPSEGVMVL.

14-17 (EHTD) lines the substrate pocket. ATP contacts are provided by residues Ser-46 and 98–104 (GSGLSSS). Ser-104 and Glu-136 together coordinate Mg(2+). The Proton acceptor role is filled by Asp-148. Residue Tyr-197 coordinates substrate.

It belongs to the GHMP kinase family. GalK subfamily.

Its subcellular location is the cytoplasm. The enzyme catalyses alpha-D-galactose + ATP = alpha-D-galactose 1-phosphate + ADP + H(+). It functions in the pathway carbohydrate metabolism; galactose metabolism. Catalyzes the transfer of the gamma-phosphate of ATP to D-galactose to form alpha-D-galactose-1-phosphate (Gal-1-P). In Thermococcus kodakarensis (strain ATCC BAA-918 / JCM 12380 / KOD1) (Pyrococcus kodakaraensis (strain KOD1)), this protein is Galactokinase.